A 309-amino-acid polypeptide reads, in one-letter code: Putative ankyrin repeat protein R603 (309 aa).

7 ANK repeats span residues 53–82, 83–112, 114–144, 145–176, 177–206, 214–243, and 245–274; these read QVNG…MNPE, NKSQ…DVSL, DHFA…DVTS, NNNL…DIHA, DEYF…DVNM, NVLS…DISF, and DDND…DISF.

The protein is Putative ankyrin repeat protein R603 of Acanthamoeba polyphaga (Amoeba).